The primary structure comprises 179 residues: Molybdopterin synthase catalytic subunit (179 aa).

A compositionally biased stretch (polar residues) spans 1-10 (MTTSEDQTTP). The disordered stretch occupies residues 1-21 (MTTSEDQTTPAHLDPKTYPRH). Substrate contacts are provided by residues 127–128 (HR), Lys143, and 150–152 (KRE).

Belongs to the MoaE family. MOCS2B subfamily. As to quaternary structure, heterotetramer; composed of 2 small (MOCS2A) and 2 large (MOCS2B) subunits.

Its subcellular location is the cytoplasm. It carries out the reaction 2 [molybdopterin-synthase sulfur-carrier protein]-C-terminal-Gly-aminoethanethioate + cyclic pyranopterin phosphate + H2O = molybdopterin + 2 [molybdopterin-synthase sulfur-carrier protein]-C-terminal Gly-Gly + 2 H(+). It participates in cofactor biosynthesis; molybdopterin biosynthesis. Catalytic subunit of the molybdopterin synthase complex, a complex that catalyzes the conversion of precursor Z into molybdopterin. Acts by mediating the incorporation of 2 sulfur atoms from thiocarboxylated MOCS2A into precursor Z to generate a dithiolene group. This is Molybdopterin synthase catalytic subunit from Aspergillus oryzae (strain ATCC 42149 / RIB 40) (Yellow koji mold).